Consider the following 124-residue polypeptide: Glutaredoxin-2 (124 aa).

A disulfide bridge links Cys13 with Cys16.

The protein belongs to the glutaredoxin family. Homodimer.

It is found in the host cytoplasm. In terms of biological role, glutaredoxin necessary for virion morphogenesis and virus replication. Functions as a thiol-disulfide transfer protein between membrane-associated OPG128 and substrates OPG095 or OPG053. The complete pathway for formation of disulfide bonds in intracellular virion membrane proteins sequentially involves oxidation of OPG072, OPG128 and OPG088. Exhibit thioltransferase and dehydroascorbate reductase activities in vitro. This chain is Glutaredoxin-2 (OPG088), found in Homo sapiens (Human).